The sequence spans 567 residues: MDIQRIVLFAGLAIVSYLMVLAWNEDYHQPQTEQVAEAQSSSDSSATNSTDDMILPEDNNAGGEEFATPETGSLASTSANSDQDLADRFITVTTDVYELKIDRVGGNVVDSSLLQYDESLDSEQPLKLLTNTSTRTYLLESGLIGRDGPDGSQAGEAPVFQAETGSYQLAEGEDELTINLVYTTDSGVAITKRYHLARNSYQIDVSYLIDNRSESPWQGNFTGKIVRDQAPDPTSQASMGIRAYLGMVISTPEDPYEKYDFEDLSEKRVNQSVTNGWLAFLQHYFLTAWIPERDQKAQFQTTRRGDLHVMGFVYPATTVAPGETAEVGATAYVGPKIIDRLEALAPNLDRTVDFGWLFFISLPLFYILEWFYGLVGNWGVAIILLTVLVKAVFFHLSATSYRSMAKMRAVAPQLTRLKELYGDDRQRMSQEMMALYKREKINPLGGCLPILVQMPVFISLYWVLFESVQLRHAPFMLWIQDLSQMDPYFILPILMGASMFIQMSLNPTPPDPMQAKIMKLMPLIFTVFFLWFPAGLVLYWLVNNILSISQQWYITRKIEAETAGKKY.

The chain crosses the membrane as a helical span at residues 3–23; it reads IQRIVLFAGLAIVSYLMVLAW. A disordered region spans residues 32 to 80; that stretch reads TEQVAEAQSSSDSSATNSTDDMILPEDNNAGGEEFATPETGSLASTSAN. Low complexity predominate over residues 40-52; that stretch reads SSSDSSATNSTDD. The span at 70–80 shows a compositional bias: polar residues; sequence ETGSLASTSAN. Helical transmembrane passes span 354–374, 378–398, 445–465, 485–505, and 522–542; these read FGWL…FYGL, WGVA…HLSA, GGCL…WVLF, MDPY…QMSL, and PLIF…YWLV.

Belongs to the OXA1/ALB3/YidC family. Type 1 subfamily. Interacts with the Sec translocase complex via SecD. Specifically interacts with transmembrane segments of nascent integral membrane proteins during membrane integration.

The protein resides in the cell inner membrane. Required for the insertion and/or proper folding and/or complex formation of integral membrane proteins into the membrane. Involved in integration of membrane proteins that insert both dependently and independently of the Sec translocase complex, as well as at least some lipoproteins. Aids folding of multispanning membrane proteins. In Marinobacter nauticus (strain ATCC 700491 / DSM 11845 / VT8) (Marinobacter aquaeolei), this protein is Membrane protein insertase YidC.